The chain runs to 732 residues: uncharacterized protein (732 aa).

Disordered stretches follow at residues 38 to 90 (TTLA…NNNK) and 226 to 629 (EESP…MDYQ). A compositionally biased stretch (low complexity) spans 47-56 (QQQQQQQQQQ). The span at 57–76 (PPSSSTTKEGGATTTQDNKL) shows a compositional bias: polar residues. 3 stretches are compositionally biased toward low complexity: residues 77 to 89 (TANG…NNNN), 231 to 247 (TTTT…TTAA), and 254 to 318 (TTTT…GTNS). A compositionally biased stretch (basic residues) spans 327–338 (KAKKGVPKKAPT). 3 stretches are compositionally biased toward low complexity: residues 339-383 (KKQP…APKT), 401-421 (KTSK…STTK), and 487-523 (SAST…IKSK). A compositionally biased stretch (acidic residues) spans 553–566 (AAAEEQEEEEEEDN). Composition is skewed to low complexity over residues 567-577 (SNGIQNNNSSN) and 593-609 (DNFS…NGLL). The segment covering 610–621 (SEDDDDDDDDDN) has biased composition (acidic residues).

This is an uncharacterized protein from Dictyostelium discoideum (Social amoeba).